The primary structure comprises 498 residues: Myocyte-specific enhancer factor 2D homolog (498 aa).

Residues 1 to 100 (MGRKKIQIQR…KGFNGCDSPE (100 aa)) form an interaction with hdac9 region. In terms of domain architecture, MADS-box spans 3–57 (RKKIQIQRITDERNRQVTFTKRKFGLMKKAYELSVLCDCEIALIIFNHSNKLFQY). The mef2-type DNA-binding region spans 58-86 (ASTDMDKVLLKYTEYNEPHESRTNADIIE). Disordered stretches follow at residues 173–215 (LTDP…NSNG), 243–267 (LGKV…NSRK), and 411–498 (SIKR…AWVT). Residues 412-424 (IKREPASPNRERS) are compositionally biased toward basic and acidic residues. 2 stretches are compositionally biased toward polar residues: residues 425 to 434 (TGTPLSCFSH) and 447 to 457 (DSLSSNASSFE).

The protein belongs to the MEF2 family. Binds DNA as a multimer, probably as a dimer. Interacts with hdac9. As to expression, restricted to the somitic mesoderm of early embryos and to the body muscle (myotomes) of the tadpole. Expressed in all tissues examined in the adult.

Its subcellular location is the nucleus. In terms of biological role, may regulate muscle-specific transcription in the embryo and may regulate transcription of a variety of cell types in the adult. It binds to the sequence 5'-CTA[TA]4TAR-3'. This Xenopus laevis (African clawed frog) protein is Myocyte-specific enhancer factor 2D homolog (mef2d).